A 359-amino-acid polypeptide reads, in one-letter code: 3-dehydroquinate synthase (359 aa).

Residues 71-76 (DGEAYK), 105-109 (GVVGD), 129-130 (TT), Lys142, and Lys151 contribute to the NAD(+) site. Residues Glu184, His247, and His264 each coordinate Zn(2+).

It belongs to the sugar phosphate cyclases superfamily. Dehydroquinate synthase family. Co(2+) serves as cofactor. The cofactor is Zn(2+). Requires NAD(+) as cofactor.

The protein resides in the cytoplasm. The enzyme catalyses 7-phospho-2-dehydro-3-deoxy-D-arabino-heptonate = 3-dehydroquinate + phosphate. Its pathway is metabolic intermediate biosynthesis; chorismate biosynthesis; chorismate from D-erythrose 4-phosphate and phosphoenolpyruvate: step 2/7. Its function is as follows. Catalyzes the conversion of 3-deoxy-D-arabino-heptulosonate 7-phosphate (DAHP) to dehydroquinate (DHQ). This Burkholderia orbicola (strain MC0-3) protein is 3-dehydroquinate synthase.